Reading from the N-terminus, the 687-residue chain is Ataxin-1-like (687 aa).

The span at 1 to 19 shows a compositional bias: basic and acidic residues; it reads MKPVHERSQECLPPKKRDL. Disordered stretches follow at residues 1 to 46, 185 to 223, and 261 to 294; these read MKPV…SEWS, ATPP…LDLA, and SALE…KGES. An interaction with NCOR2 and ATXN1 region spans residues 20–197; it reads PVTSEDMGRT…PPQAASPAQS (178 aa). A self-association region spans residues 20–197; it reads PVTSEDMGRT…PPQAASPAQS (178 aa). Polar residues-rich tracts occupy residues 28–43 and 198–219; these read RTTS…SDAS and FNKS…NTQP. Over residues 272–283 the composition is skewed to basic and acidic residues; it reads RQRERNVRRESE. Position 282 is a phosphoserine (S282). T328 carries the phosphothreonine modification. A disordered region spans residues 356 to 379; that stretch reads DEPSPLNLSHHNLDHQGEGRGSAR. S359 carries the phosphoserine modification. The 132-residue stretch at 455 to 586 folds into the AXH domain; sequence PPPVTSSHLP…SISLQSLNSN (132 aa). Residues 587 to 649 are disordered; the sequence is SVSQASCAPP…PGAQACWPAP (63 aa).

This sequence belongs to the ATXN1 family. In terms of assembly, homodimer. Interacts (via AXH domain) with NCOR2. Interacts with ATXN1 and CIC. Directly interacts with RBPJ; this interaction is disrupted in the presence of Notch intracellular domain. Competes with ATXN1 for RBPJ-binding. Found in a complex with CIC and ATXN1. As to expression, expressed in the cortex and hypothalamus (at protein level). Expressed in neuronal cells. Highly expressed in Purkinje cells of cerebellum.

It localises to the nucleus. It is found in the cell projection. The protein resides in the dendrite. Chromatin-binding factor that repress Notch signaling in the absence of Notch intracellular domain by acting as a CBF1 corepressor. Binds to the HEY promoter and might assist, along with NCOR2, RBPJ-mediated repression. Can suppress the cytotoxicity of ATXN1 in spinocerebellar ataxia type 1 (SCA1). In concert with CIC and ATXN1, involved in brain development. The polypeptide is Ataxin-1-like (Atxn1l) (Mus musculus (Mouse)).